Consider the following 315-residue polypeptide: Serine/threonine-protein phosphatase PP2A catalytic subunit 2 (315 aa).

Mn(2+)-binding residues include aspartate 62, histidine 64, aspartate 90, and asparagine 122. Histidine 123 serves as the catalytic Proton donor. Mn(2+)-binding residues include histidine 172 and histidine 247. A disordered region spans residues 294–315 (QFEPAPRENEPHTTRRVPDYFL). The segment covering 298 to 315 (APRENEPHTTRRVPDYFL) has biased composition (basic and acidic residues). The residue at position 315 (leucine 315) is a Leucine methyl ester.

The protein belongs to the PPP phosphatase family. PP-2A subfamily. Requires Mn(2+) as cofactor. Reversibly methyl esterified on Leu-315 by leucine carboxyl methyltransferase 1 (PPM1) and protein phosphatase methylesterase 1 (PPE1). Carboxyl methylation influences the affinity of the catalytic subunit for the different regulatory subunits, thereby modulating the PP2A holoenzyme's substrate specificity, enzyme activity and cellular localization.

It carries out the reaction O-phospho-L-seryl-[protein] + H2O = L-seryl-[protein] + phosphate. The enzyme catalyses O-phospho-L-threonyl-[protein] + H2O = L-threonyl-[protein] + phosphate. The protein is Serine/threonine-protein phosphatase PP2A catalytic subunit 2 (Ppn2) of Paramecium tetraurelia.